The sequence spans 101 residues: uncharacterized protein (101 aa).

This is an uncharacterized protein from Schizosaccharomyces pombe (strain 972 / ATCC 24843) (Fission yeast).